We begin with the raw amino-acid sequence, 291 residues long: Light-independent protochlorophyllide reductase iron-sulfur ATP-binding protein (291 aa).

ATP contacts are provided by residues 10–15 (GIGKST) and K39. Residue S14 coordinates Mg(2+). The [4Fe-4S] cluster site is built by C95 and C129. 180–181 (NR) is an ATP binding site.

Belongs to the NifH/BchL/ChlL family. In terms of assembly, homodimer. Protochlorophyllide reductase is composed of three subunits; ChlL, ChlN and ChlB. [4Fe-4S] cluster is required as a cofactor.

It is found in the plastid. Its subcellular location is the chloroplast. It carries out the reaction chlorophyllide a + oxidized 2[4Fe-4S]-[ferredoxin] + 2 ADP + 2 phosphate = protochlorophyllide a + reduced 2[4Fe-4S]-[ferredoxin] + 2 ATP + 2 H2O. Its pathway is porphyrin-containing compound metabolism; chlorophyll biosynthesis (light-independent). Functionally, component of the dark-operative protochlorophyllide reductase (DPOR) that uses Mg-ATP and reduced ferredoxin to reduce ring D of protochlorophyllide (Pchlide) to form chlorophyllide a (Chlide). This reaction is light-independent. The L component serves as a unique electron donor to the NB-component of the complex, and binds Mg-ATP. The sequence is that of Light-independent protochlorophyllide reductase iron-sulfur ATP-binding protein from Pinus koraiensis (Korean pine).